A 276-amino-acid polypeptide reads, in one-letter code: Aliphatic sulfonates import ATP-binding protein SsuB 1 (276 aa).

The disordered stretch occupies residues 1-21 (MSTGNVTTLRRPEAPPSLPAG). The 221-residue stretch at 39–259 (FSFRNVTKSF…RHGTPEFARL (221 aa)) folds into the ABC transporter domain. An ATP-binding site is contributed by 71-78 (GKSGCGKS).

It belongs to the ABC transporter superfamily. Aliphatic sulfonates importer (TC 3.A.1.17.2) family. The complex is composed of two ATP-binding proteins (SsuB), two transmembrane proteins (SsuC) and a solute-binding protein (SsuA).

It is found in the cell inner membrane. It catalyses the reaction ATP + H2O + aliphatic sulfonate-[sulfonate-binding protein]Side 1 = ADP + phosphate + aliphatic sulfonateSide 2 + [sulfonate-binding protein]Side 1.. Functionally, part of the ABC transporter complex SsuABC involved in aliphatic sulfonates import. Responsible for energy coupling to the transport system. This Agrobacterium fabrum (strain C58 / ATCC 33970) (Agrobacterium tumefaciens (strain C58)) protein is Aliphatic sulfonates import ATP-binding protein SsuB 1.